Reading from the N-terminus, the 329-residue chain is uncharacterized protein (329 aa).

Disordered regions lie at residues 16-41 (RCGYPKAQEGTPAEGEQNSRKPSRIC) and 183-229 (LENK…KFEP). Residues 213 to 229 (SNDKANRGEKGEAKFEP) show a composition bias toward basic and acidic residues.

Expressed in testis and epididymis. Expressed at lower levels in ovary.

Dispensable for normal development and fertility. This is an uncharacterized protein from Mus musculus (Mouse).